A 372-amino-acid polypeptide reads, in one-letter code: L-selectin (372 aa).

Positions 1-28 (MIFPRKCQSTQRDLWNIFKLWGWTMLCC) are cleaved as a signal peptide. The propeptide occupies 29 to 38 (DFLAHHGTDC). Residues 39-332 (WTYHYSENPM…FSMIKEGDYN (294 aa)) are Extracellular-facing. The 101-residue stretch at 55–155 (RFCRENYTDL…ACHKPKAALC (101 aa)) folds into the C-type lectin domain. 10 cysteine pairs are disulfide-bonded: cysteine 57/cysteine 155, cysteine 128/cysteine 147, cysteine 128/cysteine 160, cysteine 160/cysteine 171, cysteine 165/cysteine 180, cysteine 182/cysteine 191, cysteine 197/cysteine 241, cysteine 227/cysteine 254, cysteine 259/cysteine 303, and cysteine 289/cysteine 316. Residues asparagine 60 and asparagine 104 are each glycosylated (N-linked (GlcNAc...) asparagine). Ca(2+)-binding residues include glutamate 118, asparagine 120, glutamate 126, asparagine 143, and aspartate 144. An EGF-like domain is found at 156–192 (YTASCQPWSCSGHGECVEIINNYTCNCDVGYYGPQCQ). Asparagine 177 carries an N-linked (GlcNAc...) asparagine glycan. Sushi domains lie at 195 to 256 (IQCE…TCQV) and 257 to 318 (IQCE…ICQK). N-linked (GlcNAc...) asparagine glycans are attached at residues asparagine 226, asparagine 232, asparagine 246, and asparagine 271. A helical membrane pass occupies residues 333 to 355 (PLFIPVAVMVTAFSGLAFIIWLA). The Cytoplasmic portion of the chain corresponds to 356 to 372 (RRLKKGKKSKKSMDDPY).

It belongs to the selectin/LECAM family. As to quaternary structure, interaction with SELPLG/PSGL1 and PODXL2 is required for promoting recruitment and rolling of leukocytes. This interaction is dependent on the sialyl Lewis X glycan modification of SELPLG and PODXL2, and tyrosine sulfation modifications of SELPLG. Sulfation on 'Tyr-51' of SELPLG is important for L-selectin binding. Post-translationally, N-glycosylated.

It localises to the cell membrane. Functionally, calcium-dependent lectin that mediates cell adhesion by binding to glycoproteins on neighboring cells. Mediates the adherence of lymphocytes to endothelial cells of high endothelial venules in peripheral lymph nodes. Promotes initial tethering and rolling of leukocytes in endothelia. The chain is L-selectin (SELL) from Macaca mulatta (Rhesus macaque).